Consider the following 141-residue polypeptide: Large ribosomal subunit protein uL11 (141 aa).

It belongs to the universal ribosomal protein uL11 family. As to quaternary structure, part of the ribosomal stalk of the 50S ribosomal subunit. Interacts with L10 and the large rRNA to form the base of the stalk. L10 forms an elongated spine to which L12 dimers bind in a sequential fashion forming a multimeric L10(L12)X complex. In terms of processing, one or more lysine residues are methylated.

Functionally, forms part of the ribosomal stalk which helps the ribosome interact with GTP-bound translation factors. The chain is Large ribosomal subunit protein uL11 from Helicobacter acinonychis (strain Sheeba).